Here is a 160-residue protein sequence, read N- to C-terminus: 6,7-dimethyl-8-ribityllumazine synthase (160 aa).

Residues Trp31, 65 to 67, and 89 to 91 each bind 5-amino-6-(D-ribitylamino)uracil; these read SFE and CVV. 94–95 is a (2S)-2-hydroxy-3-oxobutyl phosphate binding site; it reads DT. The Proton donor role is filled by His97. Phe122 serves as a coordination point for 5-amino-6-(D-ribitylamino)uracil. Residue Arg136 participates in (2S)-2-hydroxy-3-oxobutyl phosphate binding.

It belongs to the DMRL synthase family.

The enzyme catalyses (2S)-2-hydroxy-3-oxobutyl phosphate + 5-amino-6-(D-ribitylamino)uracil = 6,7-dimethyl-8-(1-D-ribityl)lumazine + phosphate + 2 H2O + H(+). It participates in cofactor biosynthesis; riboflavin biosynthesis; riboflavin from 2-hydroxy-3-oxobutyl phosphate and 5-amino-6-(D-ribitylamino)uracil: step 1/2. In terms of biological role, catalyzes the formation of 6,7-dimethyl-8-ribityllumazine by condensation of 5-amino-6-(D-ribitylamino)uracil with 3,4-dihydroxy-2-butanone 4-phosphate. This is the penultimate step in the biosynthesis of riboflavin. The protein is 6,7-dimethyl-8-ribityllumazine synthase of Parabacteroides distasonis (strain ATCC 8503 / DSM 20701 / CIP 104284 / JCM 5825 / NCTC 11152).